A 216-amino-acid chain; its full sequence is Ras-related protein Rab-5C (216 aa).

Residues S30, A31, G33, K34, S35, S36, H47, E48, T53, G79, N134, K135, D137, A165, and K166 each coordinate GTP. S35 is a Mg(2+) binding site. Short sequence motifs (switch) lie at residues 45 to 57 (QFHE…IGAA) and 78 to 94 (AGQE…YRGA). T53 is a binding site for Mg(2+). Positions 184 to 216 (KNEPQNAPGGPGRNRVVDLQESSQPSRSQCCSN) are disordered. Positions 203–216 (QESSQPSRSQCCSN) are enriched in polar residues. S-geranylgeranyl cysteine attachment occurs at residues C213 and C214.

Belongs to the small GTPase superfamily. Rab family. Mg(2+) is required as a cofactor. In terms of tissue distribution, detected in brain, ovary, rectum, small intestine, large intestine, liver, spleen, follicle and kidney (at protein level).

The protein localises to the cell membrane. It is found in the early endosome membrane. It catalyses the reaction GTP + H2O = GDP + phosphate + H(+). With respect to regulation, regulated by guanine nucleotide exchange factors (GEFs) which promote the exchange of bound GDP for free GTP. Regulated by GTPase activating proteins (GAPs) which increase the GTP hydrolysis activity. Inhibited by GDP dissociation inhibitors (GDIs). Functionally, the small GTPases Rab are key regulators of intracellular membrane trafficking, from the formation of transport vesicles to their fusion with membranes. Rabs cycle between an inactive GDP-bound form and an active GTP-bound form that is able to recruit to membranes different sets of downstream effectors directly responsible for vesicle formation, movement, tethering and fusion. This is Ras-related protein Rab-5C (RAB5C) from Gallus gallus (Chicken).